The chain runs to 485 residues: Inosine-5'-monophosphate dehydrogenase (485 aa).

2 consecutive CBS domains span residues 95-154 (VITN…IDDV) and 155-215 (MTKE…AKDS). NAD(+) contacts are provided by residues D249 and 299-301 (GIG). Residues G301 and G303 each coordinate K(+). S304 contacts IMP. K(+) is bound at residue C306. The Thioimidate intermediate role is filled by C306. IMP is bound by residues 339-341 (DGG), 362-363 (GS), and 386-390 (YRGMG). R402 (proton acceptor) is an active-site residue. E414 is an IMP binding site. Positions 468, 469, and 470 each coordinate K(+).

It belongs to the IMPDH/GMPR family. Homotetramer. K(+) is required as a cofactor.

It catalyses the reaction IMP + NAD(+) + H2O = XMP + NADH + H(+). The protein operates within purine metabolism; XMP biosynthesis via de novo pathway; XMP from IMP: step 1/1. With respect to regulation, mycophenolic acid (MPA) is a non-competitive inhibitor that prevents formation of the closed enzyme conformation by binding to the same site as the amobile flap. In contrast, mizoribine monophosphate (MZP) is a competitive inhibitor that induces the closed conformation. MPA is a potent inhibitor of mammalian IMPDHs but a poor inhibitor of the bacterial enzymes. MZP is a more potent inhibitor of bacterial IMPDH. Functionally, catalyzes the conversion of inosine 5'-phosphate (IMP) to xanthosine 5'-phosphate (XMP), the first committed and rate-limiting step in the de novo synthesis of guanine nucleotides, and therefore plays an important role in the regulation of cell growth. The protein is Inosine-5'-monophosphate dehydrogenase of Halalkalibacterium halodurans (strain ATCC BAA-125 / DSM 18197 / FERM 7344 / JCM 9153 / C-125) (Bacillus halodurans).